A 419-amino-acid polypeptide reads, in one-letter code: Endochitinase 2 (419 aa).

A signal peptide spans 1 to 18 (MHHLRALVGVGLAGLAAG). The GH18 domain maps to 35-343 (AQNVVYWGQN…QQAKSILVNG (309 aa)). Residue Asn153 is glycosylated (N-linked (GlcNAc...) asparagine). Glu173 functions as the Proton donor in the catalytic mechanism. Residues Asn237 and Asn256 are each glycosylated (N-linked (GlcNAc...) asparagine). The interval 343–390 (GAPCPSSGPPSSTPATAPAPTATTMPSSTSVSSPTASPTGGTVPQWGQ) is disordered. A compositionally biased stretch (low complexity) spans 355 to 384 (TPATAPAPTATTMPSSTSVSSPTASPTGGT). The region spanning 383 to 419 (GTVPQWGQCGGEGYSGPTQCVPPYQCVKQGDWWSSCR) is the CBM1 domain.

The protein belongs to the glycosyl hydrolase 18 family. Chitinase class III subfamily.

It is found in the secreted. The enzyme catalyses Random endo-hydrolysis of N-acetyl-beta-D-glucosaminide (1-&gt;4)-beta-linkages in chitin and chitodextrins.. Functionally, secreted chitinase involved in the degradation of chitin, a component of the cell walls of fungi and exoskeletal elements of some animals (including worms and arthropods). Participates in the infection process and directly acts in the penetration process of the host cuticle. The sequence is that of Endochitinase 2 (chi2) from Metarhizium anisopliae (Entomophthora anisopliae).